Consider the following 365-residue polypeptide: Chorismate synthase (365 aa).

Position 46 (R46) interacts with NADP(+). Residues 123–125 (RSS), 241–242 (NG), G281, 296–300 (KPTPS), and R322 each bind FMN.

It belongs to the chorismate synthase family. As to quaternary structure, homotetramer. FMNH2 serves as cofactor.

The catalysed reaction is 5-O-(1-carboxyvinyl)-3-phosphoshikimate = chorismate + phosphate. It participates in metabolic intermediate biosynthesis; chorismate biosynthesis; chorismate from D-erythrose 4-phosphate and phosphoenolpyruvate: step 7/7. Its function is as follows. Catalyzes the anti-1,4-elimination of the C-3 phosphate and the C-6 proR hydrogen from 5-enolpyruvylshikimate-3-phosphate (EPSP) to yield chorismate, which is the branch point compound that serves as the starting substrate for the three terminal pathways of aromatic amino acid biosynthesis. This reaction introduces a second double bond into the aromatic ring system. The protein is Chorismate synthase of Helicobacter pylori (strain Shi470).